Reading from the N-terminus, the 392-residue chain is L-rhamnonate dehydratase (392 aa).

Positions 22 and 48 each coordinate substrate. 3 residues coordinate Mg(2+): Asp214, Glu240, and Glu268. His318 acts as the Proton acceptor in catalysis. Glu338 serves as a coordination point for substrate.

This sequence belongs to the mandelate racemase/muconate lactonizing enzyme family. RhamD subfamily. Homooctamer; tetramer of dimers. The cofactor is Mg(2+).

It carries out the reaction L-rhamnonate = 2-dehydro-3-deoxy-L-rhamnonate + H2O. Its function is as follows. Catalyzes the dehydration of L-rhamnonate to 2-keto-3-deoxy-L-rhamnonate (KDR). The protein is L-rhamnonate dehydratase of Burkholderia cenocepacia (strain HI2424).